Here is a 229-residue protein sequence, read N- to C-terminus: uncharacterized protein (229 aa).

An ATP-binding site is contributed by 22–29; that stretch reads GMIAFGKT.

This is an uncharacterized protein from Mycoplasma pneumoniae (strain ATCC 29342 / M129 / Subtype 1) (Mycoplasmoides pneumoniae).